A 393-amino-acid polypeptide reads, in one-letter code: Phosphoglycerate kinase (393 aa).

Substrate is bound by residues 22–24 (DFN), Arg-37, 60–63 (HLGR), Arg-119, and Arg-152. Residues Lys-202, Gly-293, Glu-324, and 350 to 353 (GGDS) each bind ATP.

Belongs to the phosphoglycerate kinase family. As to quaternary structure, monomer.

The protein resides in the cytoplasm. The catalysed reaction is (2R)-3-phosphoglycerate + ATP = (2R)-3-phospho-glyceroyl phosphate + ADP. It functions in the pathway carbohydrate degradation; glycolysis; pyruvate from D-glyceraldehyde 3-phosphate: step 2/5. This chain is Phosphoglycerate kinase, found in Borreliella burgdorferi (strain ZS7) (Borrelia burgdorferi).